We begin with the raw amino-acid sequence, 308 residues long: N-acetylmuramic acid 6-phosphate etherase (308 aa).

The SIS domain occupies 59–222 (TAERLRHGGR…STGVMVKLGK (164 aa)). The active-site Proton donor is Glu87. The active site involves Glu118.

Belongs to the GCKR-like family. MurNAc-6-P etherase subfamily. Homodimer.

It carries out the reaction N-acetyl-D-muramate 6-phosphate + H2O = N-acetyl-D-glucosamine 6-phosphate + (R)-lactate. Its pathway is amino-sugar metabolism; N-acetylmuramate degradation. In terms of biological role, specifically catalyzes the cleavage of the D-lactyl ether substituent of MurNAc 6-phosphate, producing GlcNAc 6-phosphate and D-lactate. The sequence is that of N-acetylmuramic acid 6-phosphate etherase from Nostoc punctiforme (strain ATCC 29133 / PCC 73102).